The chain runs to 323 residues: Deaminated glutathione amidase (323 aa).

Residues 1-33 (MLGFITRPPHQLLCTGYRLLRTPVLCTQPRPRT) constitute a mitochondrion transit peptide. The CN hydrolase domain maps to 42 to 294 (LPLVAVCQVT…PGLCLARIDL (253 aa)). E82 (proton acceptor) is an active-site residue. The active-site Proton donor is K157. C199 acts as the Nucleophile in catalysis.

Belongs to the carbon-nitrogen hydrolase superfamily. NIT1/NIT2 family. In terms of tissue distribution, expressed in most tissues with higher expression in adult liver and kidney as well as in fetal adrenal gland and skeletal muscle.

The protein localises to the mitochondrion. It is found in the cytoplasm. It catalyses the reaction N-(4-oxoglutaryl)-L-cysteinylglycine + H2O = L-cysteinylglycine + 2-oxoglutarate. It carries out the reaction N-(4-carboxy-4-oxobutanoyl)-L-ethylglycylglycine + H2O = N-(2-aminobutanoyl)glycine + 2-oxoglutarate. Its function is as follows. Catalyzes the hydrolysis of the amide bond in N-(4-oxoglutarate)-L-cysteinylglycine (deaminated glutathione), a metabolite repair reaction to dispose of the harmful deaminated glutathione. Possesses amidase activity toward deaminated ophthalmate in vitro. Plays a role in cell growth and apoptosis: loss of expression promotes cell growth, resistance to DNA damage stress and increased incidence to NMBA-induced tumors. Has tumor suppressor properties that enhances the apoptotic responsiveness in cancer cells; this effect is additive to the tumor suppressor activity of FHIT. It is also a negative regulator of primary T-cells. The chain is Deaminated glutathione amidase from Mus musculus (Mouse).